We begin with the raw amino-acid sequence, 454 residues long: Light-independent protochlorophyllide reductase subunit N (454 aa).

[4Fe-4S] cluster-binding residues include C22, C47, and C107.

The protein belongs to the BchN/ChlN family. As to quaternary structure, protochlorophyllide reductase is composed of three subunits; ChlL, ChlN and ChlB. Forms a heterotetramer of two ChlB and two ChlN subunits. The cofactor is [4Fe-4S] cluster.

The protein resides in the plastid. It is found in the chloroplast. It carries out the reaction chlorophyllide a + oxidized 2[4Fe-4S]-[ferredoxin] + 2 ADP + 2 phosphate = protochlorophyllide a + reduced 2[4Fe-4S]-[ferredoxin] + 2 ATP + 2 H2O. It participates in porphyrin-containing compound metabolism; chlorophyll biosynthesis (light-independent). In terms of biological role, component of the dark-operative protochlorophyllide reductase (DPOR) that uses Mg-ATP and reduced ferredoxin to reduce ring D of protochlorophyllide (Pchlide) to form chlorophyllide a (Chlide). This reaction is light-independent. The NB-protein (ChlN-ChlB) is the catalytic component of the complex. In Cycas taitungensis (Prince sago), this protein is Light-independent protochlorophyllide reductase subunit N.